The sequence spans 371 residues: Enoyl-[acyl-carrier-protein] reductase [NADH] 2, chloroplastic (371 aa).

A chloroplast-targeting transit peptide spans 1-67 (MGASVTTGLQ…SLNHKRFAVR (67 aa)). NAD(+) contacts are provided by residues glycine 87, tyrosine 94, 151–152 (DA), 198–199 (SL), and leucine 248. Residues tyrosine 250 and tyrosine 260 each act as proton acceptor in the active site. Residues lysine 268 and 298-302 (LGSRA) contribute to the NAD(+) site.

This sequence belongs to the short-chain dehydrogenases/reductases (SDR) family. FabI subfamily. Homotetramer.

It is found in the plastid. It localises to the chloroplast. The catalysed reaction is a 2,3-saturated acyl-[ACP] + NAD(+) = a (2E)-enoyl-[ACP] + NADH + H(+). It functions in the pathway lipid metabolism; fatty acid biosynthesis. Functionally, catalyzes the NAD-dependent reduction of a carbon-carbon double bond in an enoyl moiety that is covalently linked to an acyl carrier protein (ACP). Catalyzes the last reduction step in the de novo synthesis cycle of fatty acids. Involved in the elongation cycle of fatty acids which are used in lipid metabolism. Required for normal plant growth. In Oryza sativa subsp. japonica (Rice), this protein is Enoyl-[acyl-carrier-protein] reductase [NADH] 2, chloroplastic.